A 448-amino-acid chain; its full sequence is Squalene synthase ERG9 (448 aa).

A helical membrane pass occupies residues 420 to 440; that stretch reads RIEPGNFNCNVVLFGIGALIL.

The protein belongs to the phytoene/squalene synthase family. Mg(2+) is required as a cofactor.

It is found in the endoplasmic reticulum membrane. Its subcellular location is the microsome. It carries out the reaction 2 (2E,6E)-farnesyl diphosphate + NADPH + H(+) = squalene + 2 diphosphate + NADP(+). The enzyme catalyses 2 (2E,6E)-farnesyl diphosphate + NADH + H(+) = squalene + 2 diphosphate + NAD(+). The protein operates within terpene metabolism; lanosterol biosynthesis; lanosterol from farnesyl diphosphate: step 1/3. Its function is as follows. Squalene synthase; part of the third module of ergosterol biosynthesis pathway that includes the late steps of the pathway. ERG9 produces squalene from 2 farnesyl pyrophosphate moieties. The third module or late pathway involves the ergosterol synthesis itself through consecutive reactions that mainly occur in the endoplasmic reticulum (ER) membrane. Firstly, the squalene synthase ERG9 catalyzes the condensation of 2 farnesyl pyrophosphate moieties to form squalene, which is the precursor of all steroids. Squalene synthase is crucial for balancing the incorporation of farnesyl diphosphate (FPP) into sterol and nonsterol isoprene synthesis. Secondly, the squalene epoxidase ERG1 catalyzes the stereospecific oxidation of squalene to (S)-2,3-epoxysqualene, which is considered to be a rate-limiting enzyme in steroid biosynthesis. Then, the lanosterol synthase ERG7 catalyzes the cyclization of (S)-2,3 oxidosqualene to lanosterol, a reaction that forms the sterol core. In the next steps, lanosterol is transformed to zymosterol through a complex process involving various demethylation, reduction and desaturation reactions. The lanosterol 14-alpha-demethylase ERG11 (also known as CYP51) catalyzes C14-demethylation of lanosterol to produce 4,4'-dimethyl cholesta-8,14,24-triene-3-beta-ol, which is critical for ergosterol biosynthesis. The C-14 reductase ERG24 reduces the C14=C15 double bond of 4,4-dimethyl-cholesta-8,14,24-trienol to produce 4,4-dimethyl-cholesta-8,24-dienol. 4,4-dimethyl-cholesta-8,24-dienol is substrate of the C-4 demethylation complex ERG25-ERG26-ERG27 in which ERG25 catalyzes the three-step monooxygenation required for the demethylation of 4,4-dimethyl and 4alpha-methylsterols, ERG26 catalyzes the oxidative decarboxylation that results in a reduction of the 3-beta-hydroxy group at the C-3 carbon to an oxo group, and ERG27 is responsible for the reduction of the keto group on the C-3. ERG28 has a role as a scaffold to help anchor ERG25, ERG26 and ERG27 to the endoplasmic reticulum and ERG29 regulates the activity of the iron-containing C4-methylsterol oxidase ERG25. Then, the sterol 24-C-methyltransferase ERG6 catalyzes the methyl transfer from S-adenosyl-methionine to the C-24 of zymosterol to form fecosterol. The C-8 sterol isomerase ERG2 catalyzes the reaction which results in unsaturation at C-7 in the B ring of sterols and thus converts fecosterol to episterol. The sterol-C5-desaturase ERG3 then catalyzes the introduction of a C-5 double bond in the B ring to produce 5-dehydroepisterol. The C-22 sterol desaturase ERG5 further converts 5-dehydroepisterol into ergosta-5,7,22,24(28)-tetraen-3beta-ol by forming the C-22(23) double bond in the sterol side chain. Finally, ergosta-5,7,22,24(28)-tetraen-3beta-ol is substrate of the C-24(28) sterol reductase ERG4 to produce ergosterol. This Candida albicans (Yeast) protein is Squalene synthase ERG9.